A 431-amino-acid chain; its full sequence is UDP-N-acetylmuramate--L-alanine ligase (431 aa).

Position 108 to 114 (108 to 114) interacts with ATP; that stretch reads GSHGKTS.

Belongs to the MurCDEF family.

The protein localises to the cytoplasm. The enzyme catalyses UDP-N-acetyl-alpha-D-muramate + L-alanine + ATP = UDP-N-acetyl-alpha-D-muramoyl-L-alanine + ADP + phosphate + H(+). The protein operates within cell wall biogenesis; peptidoglycan biosynthesis. Functionally, cell wall formation. This chain is UDP-N-acetylmuramate--L-alanine ligase, found in Exiguobacterium sibiricum (strain DSM 17290 / CCUG 55495 / CIP 109462 / JCM 13490 / 255-15).